The primary structure comprises 337 residues: 3-isopropylmalate dehydrogenase (337 aa).

Residues arginine 88, arginine 98, arginine 122, and aspartate 212 each contribute to the substrate site. 3 residues coordinate Mg(2+): aspartate 212, aspartate 236, and aspartate 240. 272-284 is an NAD(+) binding site; that stretch reads GSAPDIAGKGIAD.

Belongs to the isocitrate and isopropylmalate dehydrogenases family. LeuB type 2 subfamily. In terms of assembly, homodimer. Mg(2+) serves as cofactor. It depends on Mn(2+) as a cofactor.

The protein localises to the cytoplasm. It catalyses the reaction (2R,3S)-3-isopropylmalate + NAD(+) = 4-methyl-2-oxopentanoate + CO2 + NADH. It functions in the pathway amino-acid biosynthesis; L-leucine biosynthesis; L-leucine from 3-methyl-2-oxobutanoate: step 3/4. Catalyzes the oxidation of 3-carboxy-2-hydroxy-4-methylpentanoate (3-isopropylmalate) to 3-carboxy-4-methyl-2-oxopentanoate. The product decarboxylates to 4-methyl-2 oxopentanoate. The polypeptide is 3-isopropylmalate dehydrogenase (Rhodococcus erythropolis (strain PR4 / NBRC 100887)).